The sequence spans 331 residues: MSTKEKLISHVMKEEPVGSRSKVTVVGVGMVGMASAISILLKDLCDELAMVDVMEDKLKGEVMDLQHGSLFLKTKIVGDKDYSVTANSKVVVVTAGARQQEGESRLNLVQRNVNIFKFIIPNIVKYSPNCILMVVSNPVDILTYVAWKLSGFPRHRVIGSGTNLDSARFRHLIGEKLHLHPSSCHAWIVGEHGDSSVPVWSGVNVAGVSLQGLNPQMGTEGDGENWKAIHKEVVDGAYEVIKLKGYTSWAIGMSVADLVESIIKNMHKVHPVSTLVQGMHGVKDEVFLSVPCVLGNSGLTDVIHMTLKAEEEKQLQKSAETLWGVQKELTL.

Residues Gly-29–Lys-57 and Arg-98 contribute to the NAD(+) site. 3 residues coordinate substrate: Arg-105, Asn-137, and Arg-168. Residue Asn-137 participates in NAD(+) binding. The Proton acceptor role is filled by His-192. Thr-247 contacts substrate.

It belongs to the LDH/MDH superfamily. LDH family. Homotetramer.

The protein resides in the cytoplasm. The catalysed reaction is (S)-lactate + NAD(+) = pyruvate + NADH + H(+). It functions in the pathway fermentation; pyruvate fermentation to lactate; (S)-lactate from pyruvate: step 1/1. In terms of biological role, interconverts simultaneously and stereospecifically pyruvate and lactate with concomitant interconversion of NADH and NAD(+). This is L-lactate dehydrogenase A chain (ldha) from Champsocephalus gunnari (Mackerel icefish).